Reading from the N-terminus, the 90-residue chain is Mitochondrial import inner membrane translocase subunit Tim8 A (90 aa).

The short motif at 36–59 (CWDKCMDKPGPKLDSRAEMCFVNC) is the Twin CX3C motif element. 2 cysteine pairs are disulfide-bonded: Cys-36–Cys-59 and Cys-40–Cys-55.

Belongs to the small Tim family. In terms of assembly, heterohexamer; composed of 3 copies of TIMM8A and 3 copies of TIMM13, named soluble 70 kDa complex. Associates with the TIM22 complex, whose core is composed of TIMM22.

The protein localises to the mitochondrion inner membrane. Mitochondrial intermembrane chaperone that participates in the import and insertion of some multi-pass transmembrane proteins into the mitochondrial inner membrane. Also required for the transfer of beta-barrel precursors from the TOM complex to the sorting and assembly machinery (SAM complex) of the outer membrane. Acts as a chaperone-like protein that protects the hydrophobic precursors from aggregation and guide them through the mitochondrial intermembrane space. The TIMM8-TIMM13 complex mediates the import of some proteins while the predominant TIMM9-TIMM10 70 kDa complex mediates the import of much more proteins. This Takifugu rubripes (Japanese pufferfish) protein is Mitochondrial import inner membrane translocase subunit Tim8 A (timm8a).